The following is a 46-amino-acid chain: Phoratoxin (46 aa).

Cystine bridges form between Cys-3–Cys-40, Cys-4–Cys-32, and Cys-16–Cys-26. Residue His-46 is modified to Blocked carboxyl end (His).

It belongs to the plant thionin (TC 1.C.44) family.

It localises to the secreted. In terms of biological role, thionins are small plant proteins which are toxic to animal cells. They seem to exert their toxic effect at the level of the cell membrane. Their precise function is not known. The protein is Phoratoxin of Phoradendron leucarpum subsp. tomentosum (California mistletoe).